The sequence spans 149 residues: Cytochrome c-type biogenesis protein CcmE (149 aa).

Over Met-1–Arg-7 the chain is Cytoplasmic. Residues Leu-8 to Ala-28 traverse the membrane as a helical; Signal-anchor for type II membrane protein segment. The Periplasmic segment spans residues Phe-29 to Tyr-149. 2 residues coordinate heme: His-123 and Tyr-127.

The protein belongs to the CcmE/CycJ family.

It is found in the cell inner membrane. Functionally, heme chaperone required for the biogenesis of c-type cytochromes. Transiently binds heme delivered by CcmC and transfers the heme to apo-cytochromes in a process facilitated by CcmF and CcmH. In Halorhodospira halophila (strain DSM 244 / SL1) (Ectothiorhodospira halophila (strain DSM 244 / SL1)), this protein is Cytochrome c-type biogenesis protein CcmE.